A 455-amino-acid chain; its full sequence is Mitochondrial distribution and morphology protein 10 (455 aa).

Disordered stretches follow at residues 216–249 (WETT…EDAV), 278–311 (IRFS…PSPA), and 377–399 (PRSS…PLGE). The span at 217–227 (ETTNGENGTNT) shows a compositional bias: low complexity. A compositionally biased stretch (polar residues) spans 228–237 (SAPGNASNSR). Residues 291–301 (AQIPPPSPFTP) show a composition bias toward pro residues.

The protein belongs to the MDM10 family. In terms of assembly, component of the ER-mitochondria encounter structure (ERMES) or MDM complex, composed of MMM1, MDM10, MDM12 and MDM34. Associates with the mitochondrial outer membrane sorting assembly machinery SAM(core) complex.

It is found in the mitochondrion outer membrane. Its function is as follows. Component of the ERMES/MDM complex, which serves as a molecular tether to connect the endoplasmic reticulum and mitochondria. Components of this complex are involved in the control of mitochondrial shape and protein biogenesis and may function in phospholipid exchange. MDM10 is involved in the late assembly steps of the general translocase of the mitochondrial outer membrane (TOM complex). Functions in the TOM40-specific route of the assembly of outer membrane beta-barrel proteins, including the association of TOM40 with the receptor TOM22 and small TOM proteins. Can associate with the SAM(core) complex as well as the MDM12-MMM1 complex, both involved in late steps of the major beta-barrel assembly pathway, that is responsible for biogenesis of all outer membrane beta-barrel proteins. May act as a switch that shuttles between both complexes and channels precursor proteins into the TOM40-specific pathway. Plays a role in mitochondrial morphology and in the inheritance of mitochondria. The chain is Mitochondrial distribution and morphology protein 10 from Coprinopsis cinerea (strain Okayama-7 / 130 / ATCC MYA-4618 / FGSC 9003) (Inky cap fungus).